A 648-amino-acid chain; its full sequence is DNA gyrase subunit B (648 aa).

The region spanning Thr-427–Pro-541 is the Toprim domain. The Mg(2+) site is built by Glu-433, Asp-506, and Asp-508.

This sequence belongs to the type II topoisomerase GyrB family. As to quaternary structure, heterotetramer, composed of two GyrA and two GyrB chains. In the heterotetramer, GyrA contains the active site tyrosine that forms a transient covalent intermediate with DNA, while GyrB binds cofactors and catalyzes ATP hydrolysis. Mg(2+) is required as a cofactor. It depends on Mn(2+) as a cofactor. The cofactor is Ca(2+).

It localises to the cytoplasm. It catalyses the reaction ATP-dependent breakage, passage and rejoining of double-stranded DNA.. In terms of biological role, a type II topoisomerase that negatively supercoils closed circular double-stranded (ds) DNA in an ATP-dependent manner to modulate DNA topology and maintain chromosomes in an underwound state. Negative supercoiling favors strand separation, and DNA replication, transcription, recombination and repair, all of which involve strand separation. Also able to catalyze the interconversion of other topological isomers of dsDNA rings, including catenanes and knotted rings. Type II topoisomerases break and join 2 DNA strands simultaneously in an ATP-dependent manner. This chain is DNA gyrase subunit B, found in Streptococcus pneumoniae serotype 4 (strain ATCC BAA-334 / TIGR4).